The chain runs to 207 residues: MVFEKIDKNSWNRKEYFDHYFASVPCTYSMTVKVDITQIKEKGMKLYPAMLYYIAMIVNRHSEFRTAINQDGELGIYDEMIPSYTIFHNDTETFSSLWTECKSDFKSFLADYESDTQRYGNNHRMEGKPNAPENIFNVSMIPWSTFDGFNLNLQKGYDYLIPIFTMGKYYKEDNKIILPLAIQVHHAVCDGFHICRFVNELQELINS.

Residue H186 is the Proton acceptor of the active site.

This sequence belongs to the chloramphenicol acetyltransferase family. Homotrimer.

It carries out the reaction chloramphenicol + acetyl-CoA = chloramphenicol 3-acetate + CoA. Its function is as follows. This enzyme is an effector of chloramphenicol resistance in bacteria. The protein is Chloramphenicol acetyltransferase (catP) of Clostridium perfringens.